A 395-amino-acid polypeptide reads, in one-letter code: 1-deoxy-D-xylulose 5-phosphate reductoisomerase (395 aa).

Residues Thr10, Gly11, Ser12, Ile13, Lys37, and Asn123 each coordinate NADPH. Lys124 is a 1-deoxy-D-xylulose 5-phosphate binding site. Glu125 is a binding site for NADPH. Asp149 contributes to the Mn(2+) binding site. 4 residues coordinate 1-deoxy-D-xylulose 5-phosphate: Ser150, Glu151, Ser185, and His208. Residue Glu151 participates in Mn(2+) binding. Gly214 contacts NADPH. The 1-deoxy-D-xylulose 5-phosphate site is built by Ser221, Asn226, Lys227, and Glu230. Mn(2+) is bound at residue Glu230.

The protein belongs to the DXR family. Requires Mg(2+) as cofactor. It depends on Mn(2+) as a cofactor.

The catalysed reaction is 2-C-methyl-D-erythritol 4-phosphate + NADP(+) = 1-deoxy-D-xylulose 5-phosphate + NADPH + H(+). It participates in isoprenoid biosynthesis; isopentenyl diphosphate biosynthesis via DXP pathway; isopentenyl diphosphate from 1-deoxy-D-xylulose 5-phosphate: step 1/6. In terms of biological role, catalyzes the NADPH-dependent rearrangement and reduction of 1-deoxy-D-xylulose-5-phosphate (DXP) to 2-C-methyl-D-erythritol 4-phosphate (MEP). The protein is 1-deoxy-D-xylulose 5-phosphate reductoisomerase of Shewanella loihica (strain ATCC BAA-1088 / PV-4).